A 1193-amino-acid chain; its full sequence is K(+) efflux antiporter 1, chloroplastic (1193 aa).

Residues 1–49 (MEYASTFQRPILFHGGDGASYCFPNRLISPKGISITSGDSKVHSCFRLR) constitute a chloroplast transit peptide. The Stromal portion of the chain corresponds to 50–585 (RNVAQSGTLN…MIPHQEVNEE (536 aa)). Positions 103-135 (SLGNADSNDHRIGESSESSDETEATDLKDARVE) are disordered. A coiled-coil region spans residues 131 to 355 (DARVENDTDS…RAEKSLSISQ (225 aa)). Residue K168 is modified to N6-acetyllysine; by NSI. A compositionally biased stretch (polar residues) spans 351–364 (LSISQTPEETQGQL). 2 disordered regions span residues 351-372 (LSIS…TSQE) and 421-474 (QPYE…NSPK). The span at 439–465 (KVVEADSEKPKINVQTKKQETQKDLPK) shows a compositional bias: basic and acidic residues. A helical membrane pass occupies residues 586 to 606 (EASLFDFLWLLLASVIFVPLF). The Chloroplast intermembrane portion of the chain corresponds to 607–612 (QKIPGG). Residues 613–633 (SPVLGYLAAGILIGPYGLSII) traverse the membrane as a helical segment. Residues 634 to 640 (RNVHGTR) are Stromal-facing. Residues 641–661 (AIAEFGVVFLLFNIGLELSVE) traverse the membrane as a helical segment. Residues 662–668 (RLSSMKK) lie on the Chloroplast intermembrane side of the membrane. A helical transmembrane segment spans residues 669–689 (YVFGLGSAQVLVTAAVVGLLA). Residues 690 to 698 (HYVAGQAGP) lie on the Stromal side of the membrane. Residues 699–719 (AAIVIGNGLALSSTAVVLQVL) traverse the membrane as a helical segment. Topologically, residues 720–733 (QERGESTSRHGRAS) are chloroplast intermembrane. The helical transmembrane segment at 734 to 754 (FSVLLFQDLAVVVLLILIPLI) threads the bilayer. The Stromal portion of the chain corresponds to 755–766 (SPNSSKGGIGFQ). Residues 767–787 (AIAEALGLAAVKAAVAITAII) form a helical membrane-spanning segment. The Chloroplast intermembrane portion of the chain corresponds to 788 to 827 (AGGRLLLRPIYKQIAENRNAEIFSANTLLVILGTSLLTAR). The helical transmembrane segment at 828-848 (AGLSMALGAFLAGLLLAETEF) threads the bilayer. The Stromal portion of the chain corresponds to 849-860 (SLQVESDIAPYR). Residues 861 to 881 (GLLLGLFFMTVGMSIDPKLLL) form a helical membrane-spanning segment. Topologically, residues 882 to 883 (SN) are chloroplast intermembrane. A helical membrane pass occupies residues 884–904 (FPVIVGTLGLLIVGKTMLVVI). Residues 905-912 (MGKLFGIS) are Stromal-facing. The chain crosses the membrane as a helical span at residues 913–933 (IISAIRVGLLLAPGGEFAFVA). The Chloroplast intermembrane portion of the chain corresponds to 934–948 (FGEAVNQGIMSPQLS). Residues 949 to 969 (SLLFLVVGISMAITPWLAAGG) traverse the membrane as a helical segment. Over 970–1193 (QLIASRFELH…QIIEGGTVVI (224 aa)) the chain is Stromal. Residues 995–1112 (QGHIIICGFG…EKAGATAVVP (118 aa)) form the RCK N-terminal domain. The interval 1165 to 1184 (GYSRTSKPKPQPSDASGDNQ) is disordered.

The protein belongs to the monovalent cation:proton antiporter 2 (CPA2) transporter (TC 2.A.37) family. KEA (TC 2.A.37.1) subfamily. In terms of processing, acetylated at Lys-168 by the stromal acetyltransferase enzyme NSI. As to expression, expressed in shoots and roots. Mainly localized to leaf veins, hypocotyls, mesophylls and guard cells. Accumulates at high levels in small and dividing plastids (at protein level).

The protein resides in the plastid. The protein localises to the chloroplast inner membrane. The catalysed reaction is K(+)(in) + H(+)(out) = K(+)(out) + H(+)(in). Repressed by sodium ions Na(+). In terms of biological role, electroneutral K(+)/H(+) efflux antiporter involved in chloroplastic K(+) homeostasis and osmotic adjustment, especially during plastid division and thylakoid membrane formation. Collaboratively with KEA2, adjusts alkaline stromal pH upon light to dark transitions in plastids. Together with KEA2, critical for chloroplast development, including chloroplast RNA-metabolism (e.g. rRNA maturation, polysome loading and RNA-protein interactions) and plastid gene expression (PGE), ion homeostasis, and photosynthesis. Contributes, during early seedling development, to the regulation of photosynthesis and abscisic acid- (ABA-) mediated primary root growth in a sucrose-dependent manner. Involved in the regulation of reactive oxygen and nitrogen species (ROS and RNS) metabolism. Required in roots for rapid hyperosmotic-induced Ca(2+) responses and for osmo-sensory potentiation in hyperosmotic conditions. May counteract resilience to drought and salt stress, involving photorespiratory pathway and stomata closure. The protein is K(+) efflux antiporter 1, chloroplastic of Arabidopsis thaliana (Mouse-ear cress).